The chain runs to 615 residues: Chaperone protein HtpG (615 aa).

An a; substrate-binding region spans residues 1 to 335 (MSAEKQTHGF…APDLPLNVSR (335 aa)). A b region spans residues 336–541 (ELLQDYGPVQ…EDQLGPQMRR (206 aa)). Residues 542 to 615 (MLEAAGQPVP…RMQALLSQSV (74 aa)) are c.

The protein belongs to the heat shock protein 90 family. In terms of assembly, homodimer.

The protein localises to the cytoplasm. Functionally, molecular chaperone. Has ATPase activity. This chain is Chaperone protein HtpG, found in Alcanivorax borkumensis (strain ATCC 700651 / DSM 11573 / NCIMB 13689 / SK2).